A 135-amino-acid polypeptide reads, in one-letter code: Large ribosomal subunit protein mL54 (135 aa).

Residues 1–14 (MAAAHLLRASRVWA) constitute a mitochondrion transit peptide.

It belongs to the mitochondrion-specific ribosomal protein mL54 family. Component of the mitochondrial ribosome large subunit (39S) which comprises a 16S rRNA and about 50 distinct proteins.

Its subcellular location is the mitochondrion. The chain is Large ribosomal subunit protein mL54 (Mrpl54) from Mus musculus (Mouse).